Consider the following 50-residue polypeptide: Photosystem II reaction center protein M (50 aa).

Residues 6–26 (FGFVASLLFVGVPTIFLIGLF) traverse the membrane as a helical segment.

It belongs to the PsbM family. PSII is composed of 1 copy each of membrane proteins PsbA, PsbB, PsbC, PsbD, PsbE, PsbF, PsbH, PsbI, PsbJ, PsbK, PsbL, PsbM, PsbT, PsbX, PsbY, Psb30/Ycf12, peripheral proteins PsbO, CyanoQ (PsbQ), PsbU, PsbV and a large number of cofactors. It forms dimeric complexes.

It is found in the cellular thylakoid membrane. Its function is as follows. One of the components of the core complex of photosystem II (PSII). PSII is a light-driven water:plastoquinone oxidoreductase that uses light energy to abstract electrons from H(2)O, generating O(2) and a proton gradient subsequently used for ATP formation. It consists of a core antenna complex that captures photons, and an electron transfer chain that converts photonic excitation into a charge separation. This subunit is found at the monomer-monomer interface. The polypeptide is Photosystem II reaction center protein M (Prochlorococcus marinus (strain MIT 9215)).